The primary structure comprises 285 residues: Golgi phosphoprotein 3-like (285 aa).

Positions 1–43 are disordered; it reads MTTLTHRTRRTEVSKSSEKKIESEEDTNQERSPDNEDPGDSKD. Basic and acidic residues predominate over residues 10–43; that stretch reads RTEVSKSSEKKIESEEDTNQERSPDNEDPGDSKD. Positions 67 and 76 each coordinate a 1,2-diacyl-sn-glycero-3-phospho-(1D-myo-inositol 4-phosphate). Position 112 is a phosphoserine (S112). A 1,2-diacyl-sn-glycero-3-phospho-(1D-myo-inositol 4-phosphate) contacts are provided by R157 and R160. A beta-hairpin required for oligomerization region spans residues 176 to 187; the sequence is EKQNFLLFDMTT.

Belongs to the GOLPH3/VPS74 family. In terms of assembly, homooligomer. Does not interact MYO18; differs from GOLPH3 by its inability to interact with MYO18. May interact with ARF1. As to expression, expressed in a subset of tissues tested with higher expression in salivary gland, small intestine and skin (at protein level).

It is found in the golgi apparatus. Its subcellular location is the golgi stack membrane. It localises to the trans-Golgi network membrane. In terms of biological role, phosphatidylinositol-4-phosphate-binding protein that may antagonize the action of GOLPH3 which is required for the process of vesicle budding at the Golgi and anterograde transport to the plasma membrane. The chain is Golgi phosphoprotein 3-like (Golph3l) from Mus musculus (Mouse).